The chain runs to 310 residues: Ribosomal protein uL3 glutamine methyltransferase (310 aa).

This sequence belongs to the protein N5-glutamine methyltransferase family. PrmB subfamily.

The enzyme catalyses L-glutaminyl-[ribosomal protein uL3] + S-adenosyl-L-methionine = N(5)-methyl-L-glutaminyl-[ribosomal protein uL3] + S-adenosyl-L-homocysteine + H(+). Methylates large ribosomal subunit protein uL3 on a specific glutamine residue. The chain is Ribosomal protein uL3 glutamine methyltransferase from Yersinia pestis.